The primary structure comprises 150 residues: Dihydroneopterin triphosphate diphosphatase (150 aa).

Positions 5–146 (VYKRPVSILV…SNRQAIEQFV (142 aa)) constitute a Nudix hydrolase domain. Lys7, Arg29, and Thr40 together coordinate substrate. The short motif at 41–62 (GSVEEGETAPQAAMREVKEEVT) is the Nudix box element. Residues Glu56 and Glu60 each coordinate Mg(2+). Position 81-84 (81-84 (FEIF)) interacts with substrate. Residue Glu117 coordinates Mg(2+). Ser135 contacts substrate.

The protein belongs to the Nudix hydrolase family. It depends on Mg(2+) as a cofactor.

The enzyme catalyses 7,8-dihydroneopterin 3'-triphosphate + H2O = 7,8-dihydroneopterin 3'-phosphate + diphosphate + H(+). Catalyzes the hydrolysis of dihydroneopterin triphosphate to dihydroneopterin monophosphate and pyrophosphate. Required for efficient folate biosynthesis. Can also hydrolyze nucleoside triphosphates with a preference for dATP. In Escherichia coli O157:H7, this protein is Dihydroneopterin triphosphate diphosphatase (nudB).